Consider the following 405-residue polypeptide: NADH-quinone oxidoreductase subunit D (405 aa).

This sequence belongs to the complex I 49 kDa subunit family. As to quaternary structure, NDH-1 is composed of 14 different subunits. Subunits NuoB, C, D, E, F, and G constitute the peripheral sector of the complex.

The protein resides in the cell inner membrane. It catalyses the reaction a quinone + NADH + 5 H(+)(in) = a quinol + NAD(+) + 4 H(+)(out). In terms of biological role, NDH-1 shuttles electrons from NADH, via FMN and iron-sulfur (Fe-S) centers, to quinones in the respiratory chain. The immediate electron acceptor for the enzyme in this species is believed to be ubiquinone. Couples the redox reaction to proton translocation (for every two electrons transferred, four hydrogen ions are translocated across the cytoplasmic membrane), and thus conserves the redox energy in a proton gradient. The chain is NADH-quinone oxidoreductase subunit D from Leptospira interrogans serogroup Icterohaemorrhagiae serovar copenhageni (strain Fiocruz L1-130).